The following is a 268-amino-acid chain: Hemin import ATP-binding protein HmuV (268 aa).

The region spanning 5 to 241 (LKAEAASFAL…ELIADVFDVA (237 aa)) is the ABC transporter domain. 37 to 44 (GPNGAGKS) lines the ATP pocket.

This sequence belongs to the ABC transporter superfamily. Heme (hemin) importer (TC 3.A.1.14.5) family. The complex is composed of two ATP-binding proteins (HmuV), two transmembrane proteins (HmuU) and a solute-binding protein (HmuT).

The protein localises to the cell inner membrane. Part of the ABC transporter complex HmuTUV involved in hemin import. Responsible for energy coupling to the transport system. The sequence is that of Hemin import ATP-binding protein HmuV from Rhodopseudomonas palustris (strain ATCC BAA-98 / CGA009).